A 519-amino-acid chain; its full sequence is Importin subunit alpha-9 (519 aa).

Positions 1–29 (MADDGSASNRRDPIKSSVGNVAGQRRRKQ) are disordered. 8 ARM repeats span residues 116 to 156 (FPPV…NIAA), 158 to 197 (KPEETKALLPALPLLIAHLGEKSSAPVAEQCAWAIGNVAG), 200 to 239 (EDLRNVLLSQGALPPLARMIFPDKGSTVRTAAWALSNLIK), 244 to 283 (KAAAQLVKIDGILDAILRHLKKTDEETATEIAWIIVYLSA), 286 to 326 (DIAT…NFVA), 335 to 374 (ILIREQNTEESIIGVLAKCLRSEHRVLKKEAAWVLSNIAA), 377 to 416 (IEHKRMIHSTEVMPLLLRILSTSPFDIRKEVAYVLGNLCV), and 429 to 468 (QEHLVSIVSGGCLRGFIELVRSPDIEAARLGLQFIELVLR).

It belongs to the importin alpha family. In terms of assembly, forms a complex with importin subunit beta-1.

The protein localises to the nucleus envelope. Binds to conventional NLS motifs and mediates nuclear protein import across the nuclear envelope. Acts as a cellular receptor for the nuclear import of the virD2 protein of Agrobacterium, but is not essential for Agrobacterium-mediated root transformation. The protein is Importin subunit alpha-9 of Arabidopsis thaliana (Mouse-ear cress).